The primary structure comprises 276 residues: CTD small phosphatase-like protein (276 aa).

The interval 1–25 (MDGPAIITQVTNPKEDEGRLPGAGE) is disordered. The FCP1 homology domain maps to 102 to 260 (LDYGKKCVVI…LDLIPFFEGL (159 aa)). Aspartate 112 functions as the 4-aspartylphosphate intermediate in the catalytic mechanism. Mg(2+)-binding residues include aspartate 112, aspartate 114, and asparagine 223. Catalysis depends on aspartate 114, which acts as the Proton donor.

In terms of assembly, interacts with REST. Monomer. Requires Mg(2+) as cofactor. Expression is restricted to non-neuronal tissues.

Its subcellular location is the nucleus. The enzyme catalyses O-phospho-L-seryl-[protein] + H2O = L-seryl-[protein] + phosphate. The catalysed reaction is O-phospho-L-threonyl-[protein] + H2O = L-threonyl-[protein] + phosphate. Functionally, recruited by REST to neuronal genes that contain RE-1 elements, leading to neuronal gene silencing in non-neuronal cells. Preferentially catalyzes the dephosphorylation of 'Ser-5' within the tandem 7 residue repeats in the C-terminal domain (CTD) of the largest RNA polymerase II subunit POLR2A. Negatively regulates RNA polymerase II transcription, possibly by controlling the transition from initiation/capping to processive transcript elongation. The sequence is that of CTD small phosphatase-like protein (CTDSPL) from Homo sapiens (Human).